A 222-amino-acid chain; its full sequence is Transmembrane protein 114 (222 aa).

The helical transmembrane segment at 7–27 (ALAGAAALSGALSFVLLAAAI) threads the bilayer. N-linked (GlcNAc...) asparagine glycosylation is found at N54 and N88. The next 3 helical transmembrane spans lie at 105 to 125 (FVIL…TGFL), 133 to 153 (LLLL…LTGI), and 188 to 208 (LALG…FLAA).

It is found in the cell junction. The protein resides in the tight junction. It localises to the lateral cell membrane. The protein localises to the apical cell membrane. In Mus musculus (Mouse), this protein is Transmembrane protein 114.